The chain runs to 181 residues: Protein Syd (181 aa).

This sequence belongs to the Syd family.

It localises to the cell inner membrane. Functionally, interacts with the SecY protein in vivo. May bind preferentially to an uncomplexed state of SecY, thus functioning either as a chelating agent for excess SecY in the cell or as a regulatory factor that negatively controls the translocase function. This is Protein Syd from Salmonella agona (strain SL483).